The chain runs to 436 residues: UPF0597 protein YhaM (436 aa).

This sequence belongs to the UPF0597 family.

This Shigella boydii serotype 4 (strain Sb227) protein is UPF0597 protein YhaM.